Reading from the N-terminus, the 186-residue chain is Glutathione S-transferase 1, isoform A (186 aa).

Residues 1–81 (MDFYYLPGSA…YLVEKYCAHD (81 aa)) enclose the GST N-terminal domain. Residues Ser-9, 50-52 (HCI), and 65-67 (ESR) each bind glutathione. Residues 92-186 (DPRRRAVVHQ…RRCRVRSAAI (95 aa)) form the GST C-terminal domain.

It belongs to the GST superfamily. Theta family. In terms of assembly, homodimer.

It catalyses the reaction RX + glutathione = an S-substituted glutathione + a halide anion + H(+). In terms of biological role, conjugation of reduced glutathione to a wide number of exogenous and endogenous hydrophobic electrophiles. This Anopheles gambiae (African malaria mosquito) protein is Glutathione S-transferase 1, isoform A.